Consider the following 316-residue polypeptide: Olfactory receptor 52A5 (316 aa).

Over 1-27 (MPTFNGSVFMPSAFILIGIPGLESVQC) the chain is Extracellular. N-linked (GlcNAc...) asparagine glycosylation occurs at asparagine 5. The helical transmembrane segment at 28-48 (WIGIPFSAMYLIGVIGNSLIL) threads the bilayer. At 49–56 (VIIKYENS) the chain is on the cytoplasmic side. A helical transmembrane segment spans residues 57 to 77 (LHIPMYIFLAMLAATDIALNT). Topologically, residues 78 to 101 (CILPKMLGIFWFHLPEISFDACLF) are extracellular. A helical membrane pass occupies residues 102–122 (QMWLIHSFQAIESGILLAMAL). The Cytoplasmic portion of the chain corresponds to 123–141 (DRYVAICIPLRHATIFSQQ). The helical transmembrane segment at 142 to 162 (FLTHIGLGVTLRAAILIIPSL) threads the bilayer. The Extracellular segment spans residues 163–199 (GLIKCCLKHYRTTVISHSYCEHMAIVKLATEDIRVNK). Residues 200 to 220 (IYGLFVAFAILGFDIIFITLS) form a helical membrane-spanning segment. Topologically, residues 221-240 (YVQIFITVFQLPQKEARFKA) are cytoplasmic. A helical transmembrane segment spans residues 241–261 (FNTCIAHICVFLQFYLLAFFS). Over 262–276 (FFTHRFGSHIPPYIH) the chain is Extracellular. The chain crosses the membrane as a helical span at residues 277–297 (ILLSNLYLLVPPFLNPIVYGV). Topologically, residues 298–316 (KTKQIRDHIVKVFFFKKVT) are cytoplasmic.

It belongs to the G-protein coupled receptor 1 family.

The protein resides in the cell membrane. Functionally, odorant receptor. This chain is Olfactory receptor 52A5 (OR52A5), found in Homo sapiens (Human).